The following is a 1975-amino-acid chain: Cadherin-87A (1975 aa).

The signal sequence occupies residues 1 to 17 (MKLPLGLLMICLGLTLA). Residues 18 to 1775 (KGETNLPPVF…AIVQDEFDLA (1758 aa)) lie on the Extracellular side of the membrane. 14 consecutive Cadherin domains span residues 28 to 132 (TQTL…PPEF), 133 to 245 (QNTP…PPVF), 246 to 358 (QGSL…PPVF), 359 to 472 (NHKE…KPVF), 473 to 669 (EQES…PPVC), 670 to 774 (ESPL…VPNF), 775 to 878 (EQQS…DPYF), 879 to 998 (VPAT…PPRF), 999 to 1103 (NAPW…DPKF), 1104 to 1211 (SQSD…APVF), 1212 to 1318 (TRDV…KPEF), 1319 to 1431 (VIPA…RPEF), 1432 to 1553 (PDAS…PPVF), and 1554 to 1677 (EKPI…PPEE). Asn39, Asn77, and Asn203 each carry an N-linked (GlcNAc...) asparagine glycan. A glycan (N-linked (GlcNAc...) asparagine) is linked at Asn424. The interval 535–560 (CHDNGESNRRERRDLNEDEHVEEDDG) is disordered. Over residues 537 to 549 (DNGESNRRERRDL) the composition is skewed to basic and acidic residues. Over residues 550 to 560 (NEDEHVEEDDG) the composition is skewed to acidic residues. 2 N-linked (GlcNAc...) asparagine glycosylation sites follow: Asn730 and Asn761. Residues Asn1039, Asn1049, Asn1111, Asn1163, Asn1217, Asn1325, Asn1349, Asn1492, Asn1576, and Asn1691 are each glycosylated (N-linked (GlcNAc...) asparagine). Residues 1776-1796 (VAGLVALVIVLFVGVISFIVL) form a helical membrane-spanning segment. Residues 1797–1975 (CCCLKHWNLS…DGDDAVAELI (179 aa)) are Cytoplasmic-facing. Polar residues predominate over residues 1887-1899 (YATIQPRNNQNRL). The interval 1887–1916 (YATIQPRNNQNRLTGGGGAGGGSMRSGGGA) is disordered. Residues 1900–1916 (TGGGGAGGGSMRSGGGA) are compositionally biased toward gly residues.

Its subcellular location is the cell membrane. Cadherins are calcium-dependent cell adhesion proteins. They preferentially interact with themselves in a homophilic manner in connecting cells. The sequence is that of Cadherin-87A (Cad87A) from Drosophila melanogaster (Fruit fly).